The chain runs to 541 residues: Chaperonin GroEL 2 (541 aa).

Residues 29–32 (TLGP), 86–90 (DGTTT), G413, 476–478 (NAA), and D492 contribute to the ATP site.

The protein belongs to the chaperonin (HSP60) family. In terms of assembly, forms a cylinder of 14 subunits composed of two heptameric rings stacked back-to-back. Interacts with the co-chaperonin GroES.

The protein resides in the cytoplasm. The catalysed reaction is ATP + H2O + a folded polypeptide = ADP + phosphate + an unfolded polypeptide.. Its function is as follows. Together with its co-chaperonin GroES, plays an essential role in assisting protein folding. The GroEL-GroES system forms a nano-cage that allows encapsulation of the non-native substrate proteins and provides a physical environment optimized to promote and accelerate protein folding. The chain is Chaperonin GroEL 2 from Streptomyces avermitilis (strain ATCC 31267 / DSM 46492 / JCM 5070 / NBRC 14893 / NCIMB 12804 / NRRL 8165 / MA-4680).